A 291-amino-acid polypeptide reads, in one-letter code: Phosphate import ATP-binding protein PstB (291 aa).

Positions 43–286 (ANVKDLSFWY…PKHAMTEEYI (244 aa)) constitute an ABC transporter domain. Residue 75-82 (GASGCGKS) participates in ATP binding.

Belongs to the ABC transporter superfamily. Phosphate importer (TC 3.A.1.7) family. As to quaternary structure, the complex is composed of two ATP-binding proteins (PstB), two transmembrane proteins (PstC and PstA) and a solute-binding protein (PstS).

Its subcellular location is the cell inner membrane. The enzyme catalyses phosphate(out) + ATP + H2O = ADP + 2 phosphate(in) + H(+). Functionally, part of the ABC transporter complex PstSACB involved in phosphate import. Responsible for energy coupling to the transport system. The chain is Phosphate import ATP-binding protein PstB from Alcaligenes faecalis.